Consider the following 855-residue polypeptide: Mitofusin FZO1 (855 aa).

The span at 1–19 (MSEGKQQFKDSNKPHKDST) shows a compositional bias: basic and acidic residues. The tract at residues 1-27 (MSEGKQQFKDSNKPHKDSTDQDDDAAT) is disordered. Residues 1–705 (MSEGKQQFKD…PSLLFTSKIP (705 aa)) lie on the Cytoplasmic side of the membrane. The HRN stretch occupies residues 91 to 190 (NYNNNRVLLK…KRVDDVSSKV (100 aa)). One can recognise a Dynamin-type G domain in the interval 184–467 (DDVSSKVFIT…KKRSLSKLLP (284 aa)). Residues 197 to 202 (NTGKSA) and 370 to 373 (KKFD) contribute to the GTP site. Lysine 398 participates in a covalent cross-link: Glycyl lysine isopeptide (Lys-Gly) (interchain with G-Cter in ubiquitin). Residue serine 408 participates in GTP binding. Over residues 413–433 (ELPHYHNENDNEDHGDRKPDD) the composition is skewed to basic and acidic residues. The disordered stretch occupies residues 413-447 (ELPHYHNENDNEDHGDRKPDDDPYSSSDPDPDFDS). Lysine 464 participates in a covalent cross-link: Glycyl lysine isopeptide (Lys-Gly) (interchain with G-Cter in ubiquitin). The segment at 484–547 (KSNMKMYSEE…KEALLNALDV (64 aa)) is HR1. Positions 630-843 (GKRLKVSLSI…QSLYEGTVAQ (214 aa)) are required for interaction with UGO1. The chain crosses the membrane as a helical span at residues 706–726 (TLTLYFLGSTKVVGNIILNGI). Topologically, residues 727-736 (KLSSWSSLKK) are mitochondrial intermembrane. Residues 737-757 (LSVPVIVVGSLLGLTYLIHDL) traverse the membrane as a helical segment. Over 758-855 (PRALPMNLSI…MVEEINLDID (98 aa)) the chain is Cytoplasmic. Positions 769 to 831 (YKRKLQELDY…KKESNLLSIK (63 aa)) are HR2. Positions 798–825 (TREILRSCEIIMDKKQITKKELENKKES) form a coiled coil.

It belongs to the TRAFAC class dynamin-like GTPase superfamily. Dynamin/Fzo/YdjA family. Mitofusin subfamily. Homodimer. Dimerization depends on GTP binding. Component of a large multiprotein complex of 800 kDa. Binds the cytoplasmic domain of UGO1 which binds MGM1 through its intermembrane space domain. Interacts with MDM30. Interacts with UBP2 and UBP12. Interacts (when ubiquitinated) with DOA1; the interaction recruits FZO1 to CDC48 and promotes FZO1 proteasomal degradation. In terms of processing, ubiquitinated at Lys-398 and Lys-464. MDM30 and UGO1 are involved in ubiquitination. Deubiquitinated by UBP2 and UBP12. UBP2 and UBP12 recognize distinct ubiquitin chains on FZO1 that have opposing effects on mitochondrial fusion. UBP2 removes ubiquitin chains that initiate proteolysis of FZO1 and inhibit fusion. UBP12 recognizes ubiquitin chains that stabilize FZO1 and promote mitochondrial fusion. UBP12 deubiquitylates FZO1 only after oligomerization.

It localises to the mitochondrion outer membrane. The enzyme catalyses GTP + H2O = GDP + phosphate + H(+). Functionally, essential transmembrane GTPase, which mediates mitochondrial fusion. Fusion proceeds through several steps; first mitochondria are tethered together, then brought into close contact, followed by the formation of a docking ring around contact areas, and finally membrane fusion. Fusion of mitochondria occurs in many cell types and constitutes an important step in mitochondrial morphology, which is balanced between fusion and fission, mediated by FZO1 and DNM1, respectively. Functions antagonistically with DNM1. Probably acts by forming membrane contact sites that mediate mitochondrial membrane fusion. Mitochondrial docking and fusion requires GTP hydrolysis. Mitochondrial fusion also promotes increased lifespan. The polypeptide is Mitofusin FZO1 (FZO1) (Saccharomyces cerevisiae (strain ATCC 204508 / S288c) (Baker's yeast)).